The chain runs to 159 residues: SsrA-binding protein (159 aa).

Basic and acidic residues predominate over residues 133–147 (KRQDLAKRDAQREMA). The segment at 133 to 159 (KRQDLAKRDAQREMARAAGRRSKGMDD) is disordered. Positions 150–159 (AGRRSKGMDD) are enriched in basic residues.

Belongs to the SmpB family.

The protein resides in the cytoplasm. Its function is as follows. Required for rescue of stalled ribosomes mediated by trans-translation. Binds to transfer-messenger RNA (tmRNA), required for stable association of tmRNA with ribosomes. tmRNA and SmpB together mimic tRNA shape, replacing the anticodon stem-loop with SmpB. tmRNA is encoded by the ssrA gene; the 2 termini fold to resemble tRNA(Ala) and it encodes a 'tag peptide', a short internal open reading frame. During trans-translation Ala-aminoacylated tmRNA acts like a tRNA, entering the A-site of stalled ribosomes, displacing the stalled mRNA. The ribosome then switches to translate the ORF on the tmRNA; the nascent peptide is terminated with the 'tag peptide' encoded by the tmRNA and targeted for degradation. The ribosome is freed to recommence translation, which seems to be the essential function of trans-translation. This is SsrA-binding protein from Salinispora arenicola (strain CNS-205).